A 1372-amino-acid polypeptide reads, in one-letter code: DNA-directed RNA polymerase subunit beta (1372 aa).

Belongs to the RNA polymerase beta chain family. The RNAP catalytic core consists of 2 alpha, 1 beta, 1 beta' and 1 omega subunit. When a sigma factor is associated with the core the holoenzyme is formed, which can initiate transcription.

The catalysed reaction is RNA(n) + a ribonucleoside 5'-triphosphate = RNA(n+1) + diphosphate. In terms of biological role, DNA-dependent RNA polymerase catalyzes the transcription of DNA into RNA using the four ribonucleoside triphosphates as substrates. This chain is DNA-directed RNA polymerase subunit beta, found in Psychrobacter arcticus (strain DSM 17307 / VKM B-2377 / 273-4).